A 358-amino-acid polypeptide reads, in one-letter code: Biotin synthase (358 aa).

The region spanning 47–306 (KNNSKIKLCA…ALYKIIMPYA (260 aa)) is the Radical SAM core domain. Positions 65, 69, and 72 each coordinate [4Fe-4S] cluster. Residues serine 142, cysteine 174, cysteine 233, and arginine 309 each coordinate [2Fe-2S] cluster.

This sequence belongs to the radical SAM superfamily. Biotin synthase family. Homodimer. The cofactor is [4Fe-4S] cluster. Requires [2Fe-2S] cluster as cofactor.

It carries out the reaction (4R,5S)-dethiobiotin + (sulfur carrier)-SH + 2 reduced [2Fe-2S]-[ferredoxin] + 2 S-adenosyl-L-methionine = (sulfur carrier)-H + biotin + 2 5'-deoxyadenosine + 2 L-methionine + 2 oxidized [2Fe-2S]-[ferredoxin]. It participates in cofactor biosynthesis; biotin biosynthesis; biotin from 7,8-diaminononanoate: step 2/2. Functionally, catalyzes the conversion of dethiobiotin (DTB) to biotin by the insertion of a sulfur atom into dethiobiotin via a radical-based mechanism. The chain is Biotin synthase from Methanocaldococcus jannaschii (strain ATCC 43067 / DSM 2661 / JAL-1 / JCM 10045 / NBRC 100440) (Methanococcus jannaschii).